The following is a 164-amino-acid chain: Phosphopantetheine adenylyltransferase (164 aa).

Ser9 contacts substrate. ATP is bound by residues Ser9–Phe10 and His17. The substrate site is built by Lys41, Val78, and Arg92. Residues Gly93–Arg95, Glu103, and Val128–Thr134 each bind ATP.

Belongs to the bacterial CoaD family. Homohexamer. Mg(2+) is required as a cofactor.

Its subcellular location is the cytoplasm. It catalyses the reaction (R)-4'-phosphopantetheine + ATP + H(+) = 3'-dephospho-CoA + diphosphate. The protein operates within cofactor biosynthesis; coenzyme A biosynthesis; CoA from (R)-pantothenate: step 4/5. Reversibly transfers an adenylyl group from ATP to 4'-phosphopantetheine, yielding dephospho-CoA (dPCoA) and pyrophosphate. The protein is Phosphopantetheine adenylyltransferase of Brucella anthropi (strain ATCC 49188 / DSM 6882 / CCUG 24695 / JCM 21032 / LMG 3331 / NBRC 15819 / NCTC 12168 / Alc 37) (Ochrobactrum anthropi).